The primary structure comprises 149 residues: Lipoprotein signal peptidase (149 aa).

3 helical membrane-spanning segments follow: residues serine 24–leucine 44, lysine 57–tryptophan 77, and glycine 81–isoleucine 101. Residues aspartate 111 and aspartate 127 contribute to the active site. Residues isoleucine 122–leucine 142 traverse the membrane as a helical segment.

Belongs to the peptidase A8 family.

The protein localises to the cell membrane. It carries out the reaction Release of signal peptides from bacterial membrane prolipoproteins. Hydrolyzes -Xaa-Yaa-Zaa-|-(S,diacylglyceryl)Cys-, in which Xaa is hydrophobic (preferably Leu), and Yaa (Ala or Ser) and Zaa (Gly or Ala) have small, neutral side chains.. Its pathway is protein modification; lipoprotein biosynthesis (signal peptide cleavage). In terms of biological role, this protein specifically catalyzes the removal of signal peptides from prolipoproteins. In Lactiplantibacillus plantarum (strain ATCC BAA-793 / NCIMB 8826 / WCFS1) (Lactobacillus plantarum), this protein is Lipoprotein signal peptidase.